Consider the following 601-residue polypeptide: Sulfite reductase [NADPH] flavoprotein alpha-component (601 aa).

The 139-residue stretch at Ile64–Val202 folds into the Flavodoxin-like domain. FMN-binding positions include Ser70–Ala75, Ser117–Gly120, and Leu153–Cys162. Residues Glu236–Pro450 form the FAD-binding FR-type domain. Residues Thr324, Ala358, Arg388–Ser391, Thr406–Gly408, Tyr412, and Gly421–Ser424 each bind FAD. NADP(+) contacts are provided by residues Ser521–Arg522, Lys527–Gln531, and Asp563. Tyr601 is a binding site for FAD.

This sequence belongs to the NADPH-dependent sulphite reductase flavoprotein subunit CysJ family. In the N-terminal section; belongs to the flavodoxin family. It in the C-terminal section; belongs to the flavoprotein pyridine nucleotide cytochrome reductase family. In terms of assembly, alpha(8)-beta(8). The alpha component is a flavoprotein, the beta component is a hemoprotein. FAD serves as cofactor. FMN is required as a cofactor.

It carries out the reaction hydrogen sulfide + 3 NADP(+) + 3 H2O = sulfite + 3 NADPH + 4 H(+). It participates in sulfur metabolism; hydrogen sulfide biosynthesis; hydrogen sulfide from sulfite (NADPH route): step 1/1. Its function is as follows. Component of the sulfite reductase complex that catalyzes the 6-electron reduction of sulfite to sulfide. This is one of several activities required for the biosynthesis of L-cysteine from sulfate. The flavoprotein component catalyzes the electron flow from NADPH -&gt; FAD -&gt; FMN to the hemoprotein component. The sequence is that of Sulfite reductase [NADPH] flavoprotein alpha-component from Citrobacter koseri (strain ATCC BAA-895 / CDC 4225-83 / SGSC4696).